The primary structure comprises 35 residues: Turgencin-B (35 aa).

Residues methionine 5 and methionine 9 each carry the methionine sulfoxide modification. Intrachain disulfides connect cysteine 7/cysteine 31, cysteine 11/cysteine 27, and cysteine 16/cysteine 24. Position 35 is a glycine amide (glycine 35).

Oxidation likely reduces antimicrobial activity against Gram-positive bacteria and Gram-negative bacteria.

The protein localises to the secreted. Has antimicrobial activity against Gram-positive bacteria (C.glutamicum ATCC 13032 (MIC=1.6 uM) and B.subtilis ATCC 23857 (MIC=1.6 uM)) and Gram-negative bacteria (E.coli ATCC 25922 (MIC=12.5 uM) and P.aeruginosa ATCC 27853 (MIC=25.0 uM)). Displays very low activity against the Gram-positive bacteria S.aureus ATCC 9144 (MIC&gt;100 uM). This is Turgencin-B from Synoicum turgens (Colonial ascidian).